The primary structure comprises 623 residues: MAU2 chromatid cohesion factor homolog (623 aa).

TPR repeat units follow at residues 96 to 129, 451 to 484, and 491 to 524; these read FDTA…SQNN, GGFY…ANAE, and SCSL…ASKI.

It belongs to the SCC4/mau-2 family. Interacts with Nipped-B to form the cohesin loading complex.

It is found in the nucleus. The protein localises to the nucleoplasm. Its function is as follows. Required for association of the cohesin complex with chromatin during interphase. Plays a role in sister chromatid cohesion and normal progression through prometaphase. The protein is MAU2 chromatid cohesion factor homolog of Drosophila grimshawi (Hawaiian fruit fly).